We begin with the raw amino-acid sequence, 311 residues long: Biotin synthase (311 aa).

Positions 32–258 constitute a Radical SAM core domain; that stretch reads NGVQFCQLLN…LFPLSRIRLA (227 aa). Residues Cys47, Cys51, and Cys54 each coordinate [4Fe-4S] cluster. [2Fe-2S] cluster-binding residues include Cys91, Cys124, Cys184, and Arg256.

This sequence belongs to the radical SAM superfamily. Biotin synthase family. As to quaternary structure, homodimer. [4Fe-4S] cluster is required as a cofactor. The cofactor is [2Fe-2S] cluster.

The catalysed reaction is (4R,5S)-dethiobiotin + (sulfur carrier)-SH + 2 reduced [2Fe-2S]-[ferredoxin] + 2 S-adenosyl-L-methionine = (sulfur carrier)-H + biotin + 2 5'-deoxyadenosine + 2 L-methionine + 2 oxidized [2Fe-2S]-[ferredoxin]. The protein operates within cofactor biosynthesis; biotin biosynthesis; biotin from 7,8-diaminononanoate: step 2/2. Catalyzes the conversion of dethiobiotin (DTB) to biotin by the insertion of a sulfur atom into dethiobiotin via a radical-based mechanism. This is Biotin synthase from Methylacidiphilum infernorum (isolate V4) (Methylokorus infernorum (strain V4)).